Here is a 658-residue protein sequence, read N- to C-terminus: NUAK family SNF1-like kinase 1 (658 aa).

An N-acetylmethionine modification is found at methionine 1. The disordered stretch occupies residues 1–53; the sequence is MEGAAVSAAGDGPAVETGLPGSPLEAVAGATAAPVEPRKPHGVKRHHHKHNLK. The residue at position 22 (serine 22) is a Phosphoserine. Basic residues predominate over residues 40 to 53; it reads PHGVKRHHHKHNLK. Positions 56 to 307 constitute a Protein kinase domain; it reads YELQETLGKG…IEDIANHWWV (252 aa). Residues 62–70 and lysine 85 contribute to the ATP site; that span reads LGKGTYGKV. Aspartate 179 (proton acceptor) is an active-site residue. At threonine 212 the chain carries Phosphothreonine; by LKB1. Disordered stretches follow at residues 353–422 and 441–568; these read LAKP…EGIV and IPLP…SYSR. Over residues 378 to 393 the composition is skewed to polar residues; sequence FPQSGQDSVPESPSKL. Residues 394–405 are compositionally biased toward basic residues; sequence SSKRPKGILKKR. A GILK motif motif is present at residues 400 to 403; sequence GILK. Serine 456 bears the Phosphoserine mark. The segment covering 519–530 has biased composition (basic residues); the sequence is SCRRKGILKHSS. Over residues 559 to 568 the composition is skewed to low complexity; the sequence is SDGISRSYSR. Serine 601 is modified (phosphoserine; by PKB/AKT1).

It belongs to the protein kinase superfamily. CAMK Ser/Thr protein kinase family. SNF1 subfamily. In terms of assembly, interacts (via GILK motif) with PPP1CB; the interaction is direct and bridges NUAK1 and PPP1R12A. Interacts with CDKN1A. Mg(2+) serves as cofactor. In terms of processing, phosphorylated at Thr-212 by STK11/LKB1 in complex with STE20-related adapter-alpha (STRADA) pseudo kinase and CAB39. Not dephosphorylated by the myosin PP1 complex when regulating its activity, due to the presence of PPP1R12A, which prevents myosin PP1 from dephosphorylating NUAK1. Phosphorylated by STK38L upon stimulation with IGF1. Post-translationally, ubiquitinated with 'Lys-29'- and 'Lys-33'-linked polyubiquitins which appear to impede LKB1-mediated phosphorylation. Deubiquitinated by USP9X. In terms of tissue distribution, expressed in the developing central nervous system, in epidermis, and some other tissues.

Its subcellular location is the nucleus. The protein localises to the cytoplasm. It catalyses the reaction L-seryl-[protein] + ATP = O-phospho-L-seryl-[protein] + ADP + H(+). The enzyme catalyses L-threonyl-[protein] + ATP = O-phospho-L-threonyl-[protein] + ADP + H(+). Its activity is regulated as follows. Activated by phosphorylation on Thr-212. Activated by phosphorylation at Ser-601 AKT1 during glucose starvation; the relevance of such activation in normal cells is however unsure. In terms of biological role, serine/threonine-protein kinase involved in various processes such as cell adhesion, regulation of cell ploidy and senescence, cell proliferation and tumor progression. Phosphorylates ATM, CASP6, LATS1, PPP1R12A and p53/TP53. Acts as a regulator of cellular senescence and cellular ploidy by mediating phosphorylation of 'Ser-464' of LATS1, thereby controlling its stability. Controls cell adhesion by regulating activity of the myosin protein phosphatase 1 (PP1) complex. Acts by mediating phosphorylation of PPP1R12A subunit of myosin PP1: phosphorylated PPP1R12A then interacts with 14-3-3, leading to reduced dephosphorylation of myosin MLC2 by myosin PP1. May be involved in DNA damage response: phosphorylates p53/TP53 at 'Ser-15' and 'Ser-392' and is recruited to the CDKN1A/WAF1 promoter to participate in transcription activation by p53/TP53. May also act as a tumor malignancy-associated factor by promoting tumor invasion and metastasis under regulation and phosphorylation by AKT1. Suppresses Fas-induced apoptosis by mediating phosphorylation of CASP6, thereby suppressing the activation of the caspase and the subsequent cleavage of CFLAR. Regulates UV radiation-induced DNA damage response mediated by CDKN1A. In association with STK11, phosphorylates CDKN1A in response to UV radiation and contributes to its degradation which is necessary for optimal DNA repair. This chain is NUAK family SNF1-like kinase 1 (Nuak1), found in Mus musculus (Mouse).